A 102-amino-acid chain; its full sequence is Small ribosomal subunit protein uS10 (102 aa).

The protein belongs to the universal ribosomal protein uS10 family. As to quaternary structure, part of the 30S ribosomal subunit.

In terms of biological role, involved in the binding of tRNA to the ribosomes. In Methanococcus maripaludis (strain C7 / ATCC BAA-1331), this protein is Small ribosomal subunit protein uS10.